A 360-amino-acid chain; its full sequence is Histidinol-phosphate aminotransferase (360 aa).

K222 is modified (N6-(pyridoxal phosphate)lysine).

Belongs to the class-II pyridoxal-phosphate-dependent aminotransferase family. Histidinol-phosphate aminotransferase subfamily. It depends on pyridoxal 5'-phosphate as a cofactor.

It catalyses the reaction L-histidinol phosphate + 2-oxoglutarate = 3-(imidazol-4-yl)-2-oxopropyl phosphate + L-glutamate. The protein operates within amino-acid biosynthesis; L-histidine biosynthesis; L-histidine from 5-phospho-alpha-D-ribose 1-diphosphate: step 7/9. The protein is Histidinol-phosphate aminotransferase of Haloarcula marismortui (strain ATCC 43049 / DSM 3752 / JCM 8966 / VKM B-1809) (Halobacterium marismortui).